A 107-amino-acid polypeptide reads, in one-letter code: Proteinase inhibitor I-A (107 aa).

The signal sequence occupies residues 1–22 (MVKFAHVVAFLLLASLIQPLTA). Positions 23–36 (RDLEINVLQLDVSQ) are excised as a propeptide.

The protein belongs to the protease inhibitor I13 (potato type I serine protease inhibitor) family.

Its subcellular location is the secreted. The protein is Proteinase inhibitor I-A (TIMPB) of Nicotiana tabacum (Common tobacco).